We begin with the raw amino-acid sequence, 474 residues long: Glutamate--tRNA ligase (474 aa).

Residues Pro10–Gly20 carry the 'HIGH' region motif. Zn(2+)-binding residues include Cys107, Cys109, Cys134, and Asp136. The short motif at Arg244–Arg248 is the 'KMSKS' region element. An ATP-binding site is contributed by Lys247.

This sequence belongs to the class-I aminoacyl-tRNA synthetase family. Glutamate--tRNA ligase type 1 subfamily. Monomer. Requires Zn(2+) as cofactor.

The protein localises to the cytoplasm. The catalysed reaction is tRNA(Glu) + L-glutamate + ATP = L-glutamyl-tRNA(Glu) + AMP + diphosphate. In terms of biological role, catalyzes the attachment of glutamate to tRNA(Glu) in a two-step reaction: glutamate is first activated by ATP to form Glu-AMP and then transferred to the acceptor end of tRNA(Glu). This is Glutamate--tRNA ligase from Anaeromyxobacter sp. (strain K).